The primary structure comprises 472 residues: Uronate isomerase (472 aa).

Belongs to the metallo-dependent hydrolases superfamily. Uronate isomerase family.

The catalysed reaction is D-glucuronate = D-fructuronate. It catalyses the reaction aldehydo-D-galacturonate = keto-D-tagaturonate. It functions in the pathway carbohydrate metabolism; pentose and glucuronate interconversion. This is Uronate isomerase from Opitutus terrae (strain DSM 11246 / JCM 15787 / PB90-1).